Here is a 216-residue protein sequence, read N- to C-terminus: Sperm microtubule inner protein 8 (216 aa).

As to quaternary structure, microtubule inner protein component of sperm flagellar doublet microtubules. Expressed in testis, prostate and placenta.

It is found in the cytoplasm. It localises to the cytoskeleton. Its subcellular location is the flagellum axoneme. Functionally, microtubule inner protein (MIP) part of the dynein-decorated doublet microtubules (DMTs) in flagellum axoneme. May serve to reinforce and thus stabilize the microtubule structure in the sperm flagella. This is Sperm microtubule inner protein 8 from Homo sapiens (Human).